Consider the following 80-residue polypeptide: Lantibiotic Flvalpha.b (80 aa).

The propeptide at 1-38 (MNKNPIYRSEEEAKNIACGNVAAELDENSQALDAINGA) is cleaved by FlvT. 2 positions are modified to 2,3-didehydrobutyrine; by FlvM1: threonine 43 and threonine 47. The segment at residues 52–55 (TVGC) is a cross-link (beta-methyllanthionine (Thr-Cys); by FlvM1). Positions 58 to 68 (SYGLGNGGYCC) form a cross-link, lanthionine (Ser-Cys); by FlvM1. 2 consecutive cross-links (beta-methyllanthionine (Thr-Cys); by FlvM1) follow at residues 69–74 (TYTVEC) and 71–78 (TVECSKTC).

Post-translationally, the lanthionine formed by Ser-58 and Cys-68 forms a putative lipid II binding motif. In terms of processing, maturation of FlvA1 peptides involves the enzymatic conversion of Thr, and Ser into dehydrated AA and the formation of thioether bonds with cysteines. Modifications are processed by the flavecin synthetase FlvM1. This is followed by membrane translocation and cleavage of the modified precursor. Contains DL-lanthionine and DL-beta-methyllanthionine, when coepressed in E.coli with the flavecin synthetase FlvM1.

The protein resides in the secreted. Functionally, lanthionine-containing peptide antibiotic (lantibiotic) only active on Gram-positive bacteria in synergy with Flvbeta peptides, which are encoded by the same operon than Flvalpha.a. Shows antibacterial activity in synergy with Flvbeta.b, Flvbeta.c, Flvbeta.e and Flvbeta.g. Does not show antibacterial activity when tested with Flvbeta.a, Flvbeta.d, Flvbeta.f and Flvbeta.h. The bactericidal activity of lantibiotics is based on depolarization of energized bacterial cytoplasmic membranes, initiated by the formation of aqueous transmembrane pores. The polypeptide is Lantibiotic Flvalpha.b (Ruminococcus flavefaciens).